The following is a 663-amino-acid chain: Translation factor GUF1, mitochondrial (663 aa).

The N-terminal 44 residues, 1 to 44 (MRGCLQSVRWLTTALRRPAPQLSCLPFQPFASTSRLFSSCASRA), are a transit peptide targeting the mitochondrion. A tr-type G domain is found at 65–245 (ERFRNFCIVA…TIVEQIPAPV (181 aa)). GTP contacts are provided by residues 74-81 (AHVDHGKS), 138-142 (DTPGH), and 192-195 (NKVD).

The protein belongs to the TRAFAC class translation factor GTPase superfamily. Classic translation factor GTPase family. LepA subfamily.

Its subcellular location is the mitochondrion inner membrane. It carries out the reaction GTP + H2O = GDP + phosphate + H(+). Its function is as follows. Promotes mitochondrial protein synthesis. May act as a fidelity factor of the translation reaction, by catalyzing a one-codon backward translocation of tRNAs on improperly translocated ribosomes. Binds to mitochondrial ribosomes in a GTP-dependent manner. The chain is Translation factor GUF1, mitochondrial from Coccidioides posadasii (strain C735) (Valley fever fungus).